We begin with the raw amino-acid sequence, 316 residues long: Pantothenate kinase (316 aa).

95–102 lines the ATP pocket; the sequence is GSVAVGKS.

Belongs to the prokaryotic pantothenate kinase family.

The protein localises to the cytoplasm. It carries out the reaction (R)-pantothenate + ATP = (R)-4'-phosphopantothenate + ADP + H(+). The protein operates within cofactor biosynthesis; coenzyme A biosynthesis; CoA from (R)-pantothenate: step 1/5. In Shewanella loihica (strain ATCC BAA-1088 / PV-4), this protein is Pantothenate kinase.